The following is a 322-amino-acid chain: Cytochrome f (322 aa).

The first 37 residues, 1–37 (MQNRKTYAYDWIKKWMIKSISTLIIINTMVWSSVSEA), serve as a signal peptide directing secretion. Heme contacts are provided by Y38, C58, C61, and H62. A helical membrane pass occupies residues 285 to 307 (VLRVQGLLLFFASVILAQIFLVL).

The protein belongs to the cytochrome f family. In terms of assembly, the 4 large subunits of the cytochrome b6-f complex are cytochrome b6, subunit IV (17 kDa polypeptide, petD), cytochrome f and the Rieske protein, while the 4 small subunits are PetG, PetL, PetM and PetN. The complex functions as a dimer. Heme is required as a cofactor.

It localises to the plastid. Its subcellular location is the chloroplast thylakoid membrane. Functionally, component of the cytochrome b6-f complex, which mediates electron transfer between photosystem II (PSII) and photosystem I (PSI), cyclic electron flow around PSI, and state transitions. This chain is Cytochrome f (petA), found in Anthoceros angustus (Hornwort).